The primary structure comprises 364 residues: Protein BRI1-5 ENHANCED 1 (364 aa).

Over residues 1–11 (MVREEQEEDDN) the composition is skewed to acidic residues. The tract at residues 1 to 22 (MVREEQEEDDNNNNNNGGGERK) is disordered. NADP(+)-binding positions include 44–49 (GGSGFV), Arg-69, 98–99 (DL), Tyr-202, Lys-206, Val-232, and Ser-244. The active-site Proton donor is Lys-206.

Belongs to the NAD(P)-dependent epimerase/dehydratase family. In terms of assembly, monomer. As to expression, mainly present in cell elongating-containing tissues. Strongly expressed in roots and flowers, also observed in petioles, stems, leaves and siliques.

It localises to the cytoplasm. It participates in plant hormone biosynthesis; brassinosteroid biosynthesis. In terms of biological role, element of the brassinosteroid metabolic pathway that regulates typhasterol (TY), castasterone (CS) and brassinolide (BL) levels. Involved in the control of organ elongation. In Arabidopsis thaliana (Mouse-ear cress), this protein is Protein BRI1-5 ENHANCED 1.